The chain runs to 365 residues: UPF0283 membrane protein Avi_2471 (365 aa).

Positions 1–10 are enriched in basic and acidic residues; that stretch reads MSKAPEDQRP. The disordered stretch occupies residues 1–47; it reads MSKAPEDQRPMPRRPAAFSLEEPSSSPARPPFAEAQEPQRRAPKSFD. The next 2 membrane-spanning stretches (helical) occupy residues 83-103 and 117-137; these read FGKL…GLWI and LGYT…VVVI.

This sequence belongs to the UPF0283 family.

It is found in the cell inner membrane. This is UPF0283 membrane protein Avi_2471 from Allorhizobium ampelinum (strain ATCC BAA-846 / DSM 112012 / S4) (Agrobacterium vitis (strain S4)).